An 82-amino-acid polypeptide reads, in one-letter code: Defensin-like protein 275 (82 aa).

Positions 1–23 are cleaved as a signal peptide; it reads MALSKFQLVALLITYTLLFSCQS. Cystine bridges form between cysteine 36–cysteine 78, cysteine 42–cysteine 65, cysteine 48–cysteine 76, and cysteine 52–cysteine 77.

Belongs to the DEFL family.

The protein resides in the secreted. In Arabidopsis thaliana (Mouse-ear cress), this protein is Defensin-like protein 275.